Here is a 175-residue protein sequence, read N- to C-terminus: Large ribosomal subunit protein uL10 (175 aa).

The protein belongs to the universal ribosomal protein uL10 family. In terms of assembly, part of the ribosomal stalk of the 50S ribosomal subunit. The N-terminus interacts with L11 and the large rRNA to form the base of the stalk. The C-terminus forms an elongated spine to which L12 dimers bind in a sequential fashion forming a multimeric L10(L12)X complex.

Its function is as follows. Forms part of the ribosomal stalk, playing a central role in the interaction of the ribosome with GTP-bound translation factors. The polypeptide is Large ribosomal subunit protein uL10 (Mycolicibacterium smegmatis (strain ATCC 700084 / mc(2)155) (Mycobacterium smegmatis)).